We begin with the raw amino-acid sequence, 472 residues long: UDP-glycosyltransferase 100 (472 aa).

The Proton acceptor role is filled by His-15. Position 15 (His-15) interacts with an anthocyanidin. Asp-117 functions as the Charge relay in the catalytic mechanism. The UDP-alpha-D-glucose site is built by Ala-344, Gln-346, His-361, Trp-364, Asn-365, Ser-366, and Glu-369. Position 384 (Gly-384) interacts with an anthocyanidin. Glu-385 and Gln-386 together coordinate UDP-alpha-D-glucose.

Belongs to the UDP-glycosyltransferase family.

It catalyses the reaction (20S)-protopanaxadiol + UDP-alpha-D-glucose = (20S)-ginsenoside C-K + UDP + H(+). The catalysed reaction is (20S)-protopanaxatriol + UDP-alpha-D-glucose = (20S)-ginsenoside Rh1 + UDP + H(+). It carries out the reaction (20S)-ginsenoside F1 + UDP-alpha-D-glucose = (20S)-ginsenoside Rg1 + UDP + H(+). The protein operates within secondary metabolite biosynthesis; terpenoid biosynthesis. Functionally, component of the dammarane-type triterpene saponins (e.g. PPT-type ginsenosides or panaxosides) biosynthetic pathway. Glycosyltransferase that catalyzes the biosynthesis of ginsenoside Rh1 from protopanaxatriol (PPT) and the conversion of ginsenoside F1 to ginsenoside Rg1. The protein is UDP-glycosyltransferase 100 of Panax ginseng (Korean ginseng).